Reading from the N-terminus, the 316-residue chain is Formimidoylglutamase (316 aa).

Positions 127, 156, 158, 160, 247, and 249 each coordinate Mn(2+).

Belongs to the arginase family. Mn(2+) serves as cofactor.

The catalysed reaction is N-formimidoyl-L-glutamate + H2O = formamide + L-glutamate. It functions in the pathway amino-acid degradation; L-histidine degradation into L-glutamate; L-glutamate from N-formimidoyl-L-glutamate (hydrolase route): step 1/1. In terms of biological role, catalyzes the conversion of N-formimidoyl-L-glutamate to L-glutamate and formamide. This chain is Formimidoylglutamase, found in Cupriavidus pinatubonensis (strain JMP 134 / LMG 1197) (Cupriavidus necator (strain JMP 134)).